Reading from the N-terminus, the 185-residue chain is MGRYSVEPDNATKSCKARGSNLRVHFKNTRETAQAIKHMALRRAQRYLKNVIAKKEIVPFRRFNGGVGRKAQAKAFGCTQGRWPKKSAEFLWQLLRNAESNADYKGLDVDRLVIDHIQVNRAPKMRRRTYRAHGRINPYMSSPCHIEVILSEKEQVVAAPSPEEDAPKKKQSKKKMARQKLMQRD.

The interval V157–D185 is disordered. Basic residues predominate over residues K169–R178.

The protein belongs to the universal ribosomal protein uL22 family.

This chain is Large ribosomal subunit protein uL22 (RpL17), found in Ixodes scapularis (Black-legged tick).